Consider the following 109-residue polypeptide: Ycf20-like protein (109 aa).

This sequence belongs to the ycf20 family.

In Synechocystis sp. (strain ATCC 27184 / PCC 6803 / Kazusa), this protein is Ycf20-like protein.